A 767-amino-acid chain; its full sequence is Cilia- and flagella-associated protein 91 (767 aa).

The disordered stretch occupies residues 1–29; that stretch reads MSHAVTIQEPQAQPQVSQTRYRERSRAGS. Residues 8–19 are compositionally biased toward polar residues; sequence QEPQAQPQVSQT.

It belongs to the CFAP91 family. Part of a complex containing MYCBP, AKAP1 and PRKAR2B. Interacts with MYCBP and AKAP1. Interacts with CFAP61. Phosphorylated by PKA.

It is found in the cytoplasm. The protein resides in the mitochondrion. Its subcellular location is the cytoskeleton. It localises to the cilium axoneme. Its function is as follows. Involved in sperm flagellum axonemal organization and function. May regulate cilium motility through its role in the assembly of the axonemal radial spokes. The chain is Cilia- and flagella-associated protein 91 (CFAP91) from Macaca fascicularis (Crab-eating macaque).